Consider the following 197-residue polypeptide: Protein-S-isoprenylcysteine O-methyltransferase A (197 aa).

3 helical membrane passes run 16–36 (MLLS…TIHG), 52–72 (ALAM…FPGL), and 81–101 (FGLI…ITAG). S-adenosyl-L-methionine is bound by residues 116–119 (HGLV), Tyr-124, and 129–132 (HPSY). Residues 140-160 (VGTQVMLCNPVSAVAFAVVVW) traverse the membrane as a helical segment. Arg-166 is a binding site for substrate. Glu-170 contacts S-adenosyl-L-methionine.

It belongs to the class VI-like SAM-binding methyltransferase superfamily. Isoprenylcysteine carboxyl methyltransferase family. The cofactor is Zn(2+). As to expression, expressed primarily in flowers, stems, leaves and roots. Almost not expressed in siliques. Detected in root tips and vascular tissues of roots, cotyledons, petiols, hypocotyls, filaments, pollen grains and the distal and proximal portions of the gynoecium.

It is found in the endoplasmic reticulum membrane. It carries out the reaction [protein]-C-terminal S-[(2E,6E)-farnesyl]-L-cysteine + S-adenosyl-L-methionine = [protein]-C-terminal S-[(2E,6E)-farnesyl]-L-cysteine methyl ester + S-adenosyl-L-homocysteine. With respect to regulation, inhibited by farnesylthioacetic acid (FTAA) and N-acetyl-S-trans, trans-farnesyl-l-cysteine (AFC). Catalyzes the post-translational methylation of isoprenylated C-terminal cysteine residues, resulting in the modulation of the function of prenylated proteins. Involved in negative regulation of abscisic acid signaling. Carboxyl methylation is a reversible and potentially regulated step in the post-translational modification of prenylated proteins. The chain is Protein-S-isoprenylcysteine O-methyltransferase A from Arabidopsis thaliana (Mouse-ear cress).